A 361-amino-acid chain; its full sequence is tRNA-specific 2-thiouridylase MnmA (361 aa).

ATP-binding positions include 8 to 15 (AMSGGVDS) and M35. The segment at 95–97 (NPD) is interaction with target base in tRNA. The active-site Nucleophile is C100. C100 and C196 are oxidised to a cystine. G124 serves as a coordination point for ATP. Residues 146-148 (KDQ) form an interaction with tRNA region. The active-site Cysteine persulfide intermediate is the C196. An interaction with tRNA region spans residues 303-304 (RY).

It belongs to the MnmA/TRMU family.

Its subcellular location is the cytoplasm. The catalysed reaction is S-sulfanyl-L-cysteinyl-[protein] + uridine(34) in tRNA + AH2 + ATP = 2-thiouridine(34) in tRNA + L-cysteinyl-[protein] + A + AMP + diphosphate + H(+). Its function is as follows. Catalyzes the 2-thiolation of uridine at the wobble position (U34) of tRNA, leading to the formation of s(2)U34. This Chlamydia felis (strain Fe/C-56) (Chlamydophila felis) protein is tRNA-specific 2-thiouridylase MnmA.